A 106-amino-acid chain; its full sequence is Small ribosomal subunit protein bS20 (106 aa).

Residues 1–32 form a disordered region; sequence MAQKKPKRNLSALKRHRQSLKRRLRNKAKKSA.

Part of the 30S ribosomal subunit.

Functionally, one of the primary rRNA binding proteins, it binds directly to 16S rRNA where it nucleates assembly of the bottom of the body of the 30S subunit, by binding to several RNA helices of the 16S rRNA. This chain is Small ribosomal subunit protein bS20 (rpsT), found in Thermus thermophilus (strain ATCC 27634 / DSM 579 / HB8).